The sequence spans 149 residues: Protein K7 (149 aa).

Belongs to the orthopoxvirus OPG044 family. In terms of assembly, interacts with DDX3; this interaction inhibits DDX3 and suppresses DDX3-mediated IFN-beta promoter induction. Interacts with TRAF6 and IRAK2; these interactions suppress TLR-dependent NF-KappaB activation.

The protein localises to the host cytoplasm. In terms of biological role, virulence factor that affects the acute immune response to infection. Bcl-2-like protein which, through its interaction with the DEAD box RNA helicase DDX3X/DDX3, prevents TBK1/IKKepsilon-mediated IRF3 activation. Contributes to virulence by binding to the host TRAF6 and IRAK2 and preventing host NF-kappa-B activation. This is Protein K7 (OPG044) from Cynomys gunnisoni (Gunnison's prairie dog).